Here is a 535-residue protein sequence, read N- to C-terminus: 2-isopropylmalate synthase (535 aa).

The Pyruvate carboxyltransferase domain maps to 13–274 (VLIFDTTLRD…YFNPFLGRPP (262 aa)). Residues aspartate 22, histidine 213, histidine 215, and asparagine 249 each contribute to the Mn(2+) site. The interval 414–535 (QLEFVQVSCG…LEQRALHPQA (122 aa)) is regulatory domain.

The protein belongs to the alpha-IPM synthase/homocitrate synthase family. LeuA type 1 subfamily. Homodimer. Mn(2+) is required as a cofactor.

The protein localises to the cytoplasm. It catalyses the reaction 3-methyl-2-oxobutanoate + acetyl-CoA + H2O = (2S)-2-isopropylmalate + CoA + H(+). Its pathway is amino-acid biosynthesis; L-leucine biosynthesis; L-leucine from 3-methyl-2-oxobutanoate: step 1/4. In terms of biological role, catalyzes the condensation of the acetyl group of acetyl-CoA with 3-methyl-2-oxobutanoate (2-ketoisovalerate) to form 3-carboxy-3-hydroxy-4-methylpentanoate (2-isopropylmalate). This Thermosynechococcus vestitus (strain NIES-2133 / IAM M-273 / BP-1) protein is 2-isopropylmalate synthase.